A 191-amino-acid chain; its full sequence is Putative glutathione-dependent formaldehyde-activating enzyme (191 aa).

The region spanning 20 to 166 (FPGGNLYCLC…FQSLGLQTYD (147 aa)) is the CENP-V/GFA domain. 7 residues coordinate Zn(2+): Cys-27, Cys-29, Cys-48, Cys-50, Cys-53, Cys-95, and Cys-98.

It belongs to the Gfa family. The cofactor is Zn(2+).

It carries out the reaction S-(hydroxymethyl)glutathione = glutathione + formaldehyde. It participates in one-carbon metabolism; formaldehyde degradation; formate from formaldehyde (glutathione route): step 1/3. Catalyzes the condensation of formaldehyde and glutathione to S-hydroxymethylglutathione. This is Putative glutathione-dependent formaldehyde-activating enzyme from Aspergillus flavus (strain ATCC 200026 / FGSC A1120 / IAM 13836 / NRRL 3357 / JCM 12722 / SRRC 167).